A 65-amino-acid polypeptide reads, in one-letter code: Kassorin-M (65 aa).

The first 22 residues, 1–22 (MLTLKKSMLLLFFLGMVSFSLA), serve as a signal peptide directing secretion. Positions 23 to 51 (DDKREDEAEEGEDKRADEGEEKRAAEKKR) are excised as a propeptide. The segment at 24 to 45 (DKREDEAEEGEDKRADEGEEKR) is disordered. At L64 the chain carries Leucine amide.

This sequence belongs to the frog skin active peptide (FSAP) family. Brevinin subfamily. In terms of tissue distribution, expressed by the skin glands.

It localises to the secreted. Functionally, induces contraction of smooth muscle in isolated guinea pig urinary bladder (EC50=4.66 nM). Has no antimicrobial activity against the Gram-positive bacterium S.aureus, the Gram-negative bacterium E.coli and the yeast C.albicans. Elicits histamine release from rat peritoneal mast cells. This is Kassorin-M from Phlyctimantis maculatus (Red-legged running frog).